Consider the following 333-residue polypeptide: Fatty acid hydroxylase domain-containing protein 2 (333 aa).

6 helical membrane-spanning segments follow: residues F29–L49, I77–L97, T134–L154, F168–Y188, V215–V235, and P237–I257. The Fatty acid hydroxylase domain maps to A176–T299.

This sequence belongs to the sterol desaturase family.

It localises to the cytoplasm. The protein localises to the membrane. Promotes megakaryocyte differentiation by enhancing ERK phosphorylation and up-regulating RUNX1 expression. This is Fatty acid hydroxylase domain-containing protein 2 (FAXDC2) from Macaca fascicularis (Crab-eating macaque).